A 508-amino-acid chain; its full sequence is Erythropoietin receptor (508 aa).

Residues 1-24 (MDHLGASLWPQVGSLCLLLAGAAW) form the signal peptide. Over 25–250 (APPPNLPDPK…SLLTPSDLDP (226 aa)) the chain is Extracellular. Residues Cys-52 and Cys-62 are joined by a disulfide bond. The N-linked (GlcNAc...) asparagine glycan is linked to Asn-76. An intrachain disulfide couples Cys-91 to Cys-107. Residues 147 to 247 (APVGLVARLA…EPVSLLTPSD (101 aa)) form the Fibronectin type-III domain. The WSXWS motif motif lies at 233–237 (WSAWS). The helical transmembrane segment at 251–273 (LILTLSLILVVILVLLTVLALLS) threads the bilayer. Over 274–508 (HRRALKQKIW…PLPPSYVACS (235 aa)) the chain is Cytoplasmic. Residue Lys-281 forms a Glycyl lysine isopeptide (Lys-Gly) (interchain with G-Cter in ubiquitin) linkage. Residues 282-290 (IWPGIPSPE) carry the Box 1 motif motif. Tyr-368 and Tyr-426 each carry phosphotyrosine; by JAK2. Residues 452 to 457 (LKYLYL) carry the ITIM motif motif. Residue Lys-453 forms a Glycyl lysine isopeptide (Lys-Gly) (interchain with G-Cter in ubiquitin) linkage. Tyr-454, Tyr-456, Tyr-468, Tyr-485, Tyr-489, and Tyr-504 each carry phosphotyrosine; by JAK2. Positions 454-456 (YLY) are required for high-affinity SOCS3 binding. The segment at 467 to 494 (DYSSGDSQGAQGGLSDGPYSNPYENSLI) is disordered.

It belongs to the type I cytokine receptor family. Type 1 subfamily. Forms homodimers on EPO stimulation. The tyrosine-phosphorylated form interacts with several SH2 domain-containing proteins including LYN, the adapter protein SH2B2, PTPN6, PTPN11, JAK2, PI3 kinases, STAT5A/B, SOCS3, CRKL. Interacts with INPP5D/SHIP1. SH2B2 binding inhibits the JAK-STAT signaling. Interacts with RHEX; this interaction occurs in a erythropoietin (EPO)-dependent manner. Interacts with ATXN2L. On EPO stimulation, phosphorylated on C-terminal tyrosine residues by JAK2. The phosphotyrosine motifs are also recruitment sites for several SH2-containing proteins and adapter proteins which mediate cell proliferation. Phosphorylation on Tyr-454 is required for PTPN6 interaction, Tyr-426 for PTPN11. Tyr-426 is also required for SOCS3 binding, but Tyr-454/Tyr-456 motif is the preferred binding site. In terms of processing, ubiquitinated by the ECS(SOCS2) complex following ligand-binding and phosphorylation by JAK2, leading to its degradation by the proteasome. Regulation by the ECS(SOCS2) complex acts as a negative feedback loop of erythropoietin-mediated signaling pathway. Ubiquitination at Lys-281 mediates receptor internalization, whereas ubiquitination at Lys-453 promotes trafficking of activated receptors to the lysosomes for degradation. Ubiquitinated by NOSIP; appears to be either multi-monoubiquitinated or polyubiquitinated. Ubiquitination mediates proliferation and survival of EPO-dependent cells. As to expression, erythroid cells and erythroid progenitor cells. In terms of tissue distribution, isoform EPOR-F is the most abundant form in EPO-dependent erythroleukemia cells and in late-stage erythroid progenitors. Isoform EPOR-S and isoform EPOR-T are the predominant forms in bone marrow. As to expression, isoform EPOR-S and isoform EPOR-T are the predominant forms in bone marrow. Isoform EPOR-T is the most abundant from in early-stage erythroid progenitor cells.

It localises to the cell membrane. It is found in the secreted. In terms of biological role, receptor for erythropoietin, which mediates erythropoietin-induced erythroblast proliferation and differentiation. Upon EPO stimulation, EPOR dimerizes triggering the JAK2/STAT5 signaling cascade. In some cell types, can also activate STAT1 and STAT3. May also activate the LYN tyrosine kinase. Acts as a dominant-negative receptor of EPOR-mediated signaling. In Homo sapiens (Human), this protein is Erythropoietin receptor.